The chain runs to 181 residues: Adenine phosphoribosyltransferase (181 aa).

This sequence belongs to the purine/pyrimidine phosphoribosyltransferase family. As to quaternary structure, homodimer.

Its subcellular location is the cytoplasm. It catalyses the reaction AMP + diphosphate = 5-phospho-alpha-D-ribose 1-diphosphate + adenine. The protein operates within purine metabolism; AMP biosynthesis via salvage pathway; AMP from adenine: step 1/1. Functionally, catalyzes a salvage reaction resulting in the formation of AMP, that is energically less costly than de novo synthesis. The protein is Adenine phosphoribosyltransferase of Chelativorans sp. (strain BNC1).